Here is a 273-residue protein sequence, read N- to C-terminus: Putative phosphoenolpyruvate synthase regulatory protein (273 aa).

An ADP-binding site is contributed by 153-160; the sequence is AVSRAGKT.

This sequence belongs to the pyruvate, phosphate/water dikinase regulatory protein family. PSRP subfamily.

The catalysed reaction is [pyruvate, water dikinase] + ADP = [pyruvate, water dikinase]-phosphate + AMP + H(+). The enzyme catalyses [pyruvate, water dikinase]-phosphate + phosphate + H(+) = [pyruvate, water dikinase] + diphosphate. Functionally, bifunctional serine/threonine kinase and phosphorylase involved in the regulation of the phosphoenolpyruvate synthase (PEPS) by catalyzing its phosphorylation/dephosphorylation. This chain is Putative phosphoenolpyruvate synthase regulatory protein, found in Xanthomonas campestris pv. campestris (strain 8004).